Reading from the N-terminus, the 359-residue chain is DNA replication and repair protein RecF (359 aa).

30–37 (GPNGSGKT) serves as a coordination point for ATP.

The protein belongs to the RecF family.

It localises to the cytoplasm. Functionally, the RecF protein is involved in DNA metabolism; it is required for DNA replication and normal SOS inducibility. RecF binds preferentially to single-stranded, linear DNA. It also seems to bind ATP. The sequence is that of DNA replication and repair protein RecF from Aliivibrio fischeri (strain MJ11) (Vibrio fischeri).